Consider the following 345-residue polypeptide: Beta-2-glycoprotein 1 (345 aa).

The signal sequence occupies residues 1–19 (MPPPALVLLLGFLCHVAIA). 4 consecutive Sushi domains span residues 21–81 (RTCP…KCMP), 82–139 (RVCP…VCAP), 140–202 (ITCP…ECRE), and 203–262 (VRCP…SCKA). 11 cysteine pairs are disulfide-bonded: cysteine 23–cysteine 66, cysteine 51–cysteine 79, cysteine 84–cysteine 124, cysteine 110–cysteine 137, cysteine 142–cysteine 188, cysteine 174–cysteine 200, cysteine 205–cysteine 248, cysteine 234–cysteine 260, cysteine 264–cysteine 315, cysteine 300–cysteine 325, and cysteine 307–cysteine 345. An O-linked (GalNAc...) threonine glycan is attached at threonine 33. An N-linked (GlcNAc...) asparagine glycan is attached at asparagine 92. N-linked (GlcNAc...) asparagine glycosylation is found at asparagine 162, asparagine 183, and asparagine 193. N-linked (GlcNAc...) asparagine glycosylation occurs at asparagine 253. Residues 263–345 (SCKLSIKRAT…KTDASDVKPC (83 aa)) form a sushi-like region.

In terms of tissue distribution, expressed by the liver and secreted in plasma.

The protein resides in the secreted. In terms of biological role, binds to various kinds of negatively charged substances such as heparin, phospholipids, and dextran sulfate. May prevent activation of the intrinsic blood coagulation cascade by binding to phospholipids on the surface of damaged cells. The sequence is that of Beta-2-glycoprotein 1 (APOH) from Bos taurus (Bovine).